A 1502-amino-acid polypeptide reads, in one-letter code: Rho GTPase-activating protein 5 (1502 aa).

FF domains are found at residues 267 to 325 (QLVV…HIEQ), 366 to 420 (KLME…HVQH), 427 to 481 (RVEM…HQRE), and 482 to 548 (IVEK…HIGF). At Y550 the chain carries 3'-nitrotyrosine. 2 positions are modified to phosphoserine: S590 and S765. A pG1 pseudoGTPase domain is found at 590–763 (STNIDKVNLF…LESVKHNLDV (174 aa)). A pG2 pseudoGTPase domain is found at 779-944 (RIVMCAMCGD…FSDVLEKKNM (166 aa)). Phosphoserine is present on residues S951 and S968. 3 disordered regions span residues 975-1004 (YNNY…LPTP), 1022-1050 (HSTP…PKTN), and 1069-1089 (NPRK…DPSD). The segment covering 1036–1045 (VPPPIKPKPV) has biased composition (pro residues). S1115 bears the Phosphoserine mark. Disordered regions lie at residues 1125–1156 (FVNN…YKYK) and 1168–1254 (YRRT…TRRN). The span at 1140 to 1150 (RTSKSHGERRP) shows a compositional bias: basic and acidic residues. Residues S1173, S1176, S1195, S1202, and S1218 each carry the phosphoserine modification. The 188-residue stretch at 1262–1449 (MPLQDLVTAE…TFIQQCQFFF (188 aa)) folds into the Rho-GAP domain.

May interact with RASA1/p120GAP. As to expression, detected in skin fibroblasts (at protein level).

Its subcellular location is the cytoplasm. It localises to the cell membrane. In terms of biological role, GTPase-activating protein for Rho family members. The sequence is that of Rho GTPase-activating protein 5 (ARHGAP5) from Homo sapiens (Human).